The primary structure comprises 553 residues: Ergothioneine transport permease/ergothioneine binding protein EgtU (553 aa).

Positions 57–236 constitute an ABC transmembrane type-1 domain; that stretch reads LAQHFIIVAL…LFSVLADKFV (180 aa). The next 6 membrane-spanning stretches (helical) occupy residues 61-81, 98-118, 122-142, 182-202, 219-239, and 261-281; these read FIIV…IGVF, FLYT…IGVG, ALLV…YNAL, IAVV…AGGL, VAGS…VSVF, and VYTN…WLIP. Over 282 to 553 the chain is Periplasmic; it reads RNAIEEKPLV…AKDFLERLGL (272 aa). The ergothioneine binding domain stretch occupies residues 288–549; it reads KPLVVATKPS…PKIVAKDFLE (262 aa).

This sequence in the N-terminal section; belongs to the binding-protein-dependent transport system permease family. The protein in the C-terminal section; belongs to the OsmX family. In terms of assembly, the complex is composed of two ATP-binding proteins (EgtV) and two transmembrane proteins (EgtU).

Its subcellular location is the cell inner membrane. Its function is as follows. Part of the ABC transporter complex EgtUV involved in the uptake of ergothioneine (EGT), a natural low-molecular weight (LMW) thiol antioxidant which protects H.pylori against bleach stress. Responsible for the translocation of the substrate across the membrane. Also contains a C-terminal periplasmic solute-binding domain (SBD) which binds to ergothioneine with low-micromolar affinity. Cannot bind the structurally similar compounds glycine betaine, choline, proline, carnitine or histidine. In Helicobacter pylori (strain G27), this protein is Ergothioneine transport permease/ergothioneine binding protein EgtU.